The sequence spans 555 residues: Glutamate--tRNA ligase (555 aa).

Residues Pro-103–His-113 carry the 'HIGH' region motif.

The protein belongs to the class-I aminoacyl-tRNA synthetase family. Glutamate--tRNA ligase type 2 subfamily.

It localises to the cytoplasm. It carries out the reaction tRNA(Glu) + L-glutamate + ATP = L-glutamyl-tRNA(Glu) + AMP + diphosphate. In terms of biological role, catalyzes the attachment of glutamate to tRNA(Glu) in a two-step reaction: glutamate is first activated by ATP to form Glu-AMP and then transferred to the acceptor end of tRNA(Glu). The chain is Glutamate--tRNA ligase from Methanobrevibacter smithii (strain ATCC 35061 / DSM 861 / OCM 144 / PS).